The primary structure comprises 212 residues: Neuroendocrine protein 7B2 (212 aa).

Residues 1–26 (MVSRMVSTMLSGLLFWLASGWTPAFA) form the signal peptide. The cysteines at positions 120 and 130 are disulfide-linked. S141 and S205 each carry phosphoserine. Residues 174–212 (GGERRKRRSVNPYLQGQRLDNVVAKKSVPHFSDEDKDPE) are disordered.

Belongs to the 7B2 family. Interacts with PCSK2/PC2 early in the secretory pathway. Dissociation occurs at later stages. Post-translationally, proteolytically cleaved in the Golgi by a furin-like convertase to generate bioactive peptides. In terms of processing, sulfated on tyrosine residues.

It localises to the secreted. Its function is as follows. Acts as a molecular chaperone for PCSK2/PC2, preventing its premature activation in the regulated secretory pathway. Binds to inactive PCSK2 in the endoplasmic reticulum and facilitates its transport from there to later compartments of the secretory pathway where it is proteolytically matured and activated. Also required for cleavage of PCSK2 but does not appear to be involved in its folding. Plays a role in regulating pituitary hormone secretion. The C-terminal peptide inhibits PCSK2 in vitro. The sequence is that of Neuroendocrine protein 7B2 (SCG5) from Homo sapiens (Human).